The following is a 217-amino-acid chain: Frizzled-8 (217 aa).

At 1–26 (AGAAELQPELAVAEHVRYESTGPALC) the chain is on the extracellular side. A helical membrane pass occupies residues 27–47 (TVVFLLVYFFGMASSIWWVIL). Topologically, residues 48-69 (SLTWFLAAGMKWGNEAIAGYAQ) are cytoplasmic. The chain crosses the membrane as a helical span at residues 70–90 (YFHLAAWLLPSVKSIAVLALS). Residues 91-113 (SVDGDPVAGICYVGNQSLENLRG) are Extracellular-facing. A glycan (N-linked (GlcNAc...) asparagine) is linked at Asn-105. A helical membrane pass occupies residues 114-134 (FVLAPLVVYLFTGSLFLLAGF). Residues 135–160 (VSLFRIRSVIKQGGTKTDKLEKLMIR) lie on the Cytoplasmic side of the membrane. The helical transmembrane segment at 161–181 (IGIFTVLYTVPATIVIACYIY) threads the bilayer. Residues 182-209 (EQHNREAWEQAQNCSCPGDPHRPKPDYA) lie on the Extracellular side of the membrane. The N-linked (GlcNAc...) asparagine glycan is linked to Asn-194. The helical transmembrane segment at 210–217 (VFMLKYFM) threads the bilayer.

This sequence belongs to the G-protein coupled receptor Fz/Smo family.

It localises to the membrane. The protein resides in the cell membrane. Receptor for Wnt proteins. Most of frizzled receptors are coupled to the beta-catenin canonical signaling pathway, which leads to the activation of disheveled proteins, inhibition of GSK-3 kinase, nuclear accumulation of beta-catenin and activation of Wnt target genes. A second signaling pathway involving PKC and calcium fluxes has been seen for some family members, but it is not yet clear if it represents a distinct pathway or if it can be integrated in the canonical pathway, as PKC seems to be required for Wnt-mediated inactivation of GSK-3 kinase. Both pathways seem to involve interactions with G-proteins. May be involved in transduction and intercellular transmission of polarity information during tissue morphogenesis and/or in differentiated tissues. The chain is Frizzled-8 (FZD8) from Gallus gallus (Chicken).